Here is a 130-residue protein sequence, read N- to C-terminus: Small ribosomal subunit protein uS8 (130 aa).

Belongs to the universal ribosomal protein uS8 family. In terms of assembly, part of the 30S ribosomal subunit. Contacts proteins S5 and S12.

One of the primary rRNA binding proteins, it binds directly to 16S rRNA central domain where it helps coordinate assembly of the platform of the 30S subunit. The chain is Small ribosomal subunit protein uS8 from Wigglesworthia glossinidia brevipalpis.